The primary structure comprises 180 residues: ATP synthase subunit delta 2 (180 aa).

The protein belongs to the ATPase delta chain family. As to quaternary structure, F-type ATPases have 2 components, F(1) - the catalytic core - and F(0) - the membrane proton channel. F(1) has five subunits: alpha(3), beta(3), gamma(1), delta(1), epsilon(1). F(0) has three main subunits: a(1), b(2) and c(10-14). The alpha and beta chains form an alternating ring which encloses part of the gamma chain. F(1) is attached to F(0) by a central stalk formed by the gamma and epsilon chains, while a peripheral stalk is formed by the delta and b chains.

The protein resides in the cell inner membrane. In terms of biological role, f(1)F(0) ATP synthase produces ATP from ADP in the presence of a proton or sodium gradient. F-type ATPases consist of two structural domains, F(1) containing the extramembraneous catalytic core and F(0) containing the membrane proton channel, linked together by a central stalk and a peripheral stalk. During catalysis, ATP synthesis in the catalytic domain of F(1) is coupled via a rotary mechanism of the central stalk subunits to proton translocation. Its function is as follows. This protein is part of the stalk that links CF(0) to CF(1). It either transmits conformational changes from CF(0) to CF(1) or is implicated in proton conduction. The chain is ATP synthase subunit delta 2 from Vibrio campbellii (strain ATCC BAA-1116).